The chain runs to 566 residues: Mucolipin-2 (566 aa).

The Cytoplasmic segment spans residues 1–65 (MPGDEETLDL…YRARRQIPWK (65 aa)). Residues 66-86 (LGLQILKIVMVTTQLVRFGLS) form a helical membrane-spanning segment. Residues 87 to 288 (NQLVVAFKED…ISGSTQRSTH (202 aa)) are Extracellular-facing. The interval 107-123 (KGFSGVDEDDYSCSIYT) is extracellular/lumenal pore loop. Intrachain disulfides connect Cys-164–Cys-190 and Cys-243–Cys-274. A helical membrane pass occupies residues 289–309 (YLLVFDVFVIMICLASLILCT). The Cytoplasmic portion of the chain corresponds to 310–346 (RSIVLALRLRKRFLNFFLEKYKQRVCGADQWEFVNGW). A helical transmembrane segment spans residues 347-367 (YVLVTISDLMTIIGSILKMEI). The Extracellular portion of the chain corresponds to 368-376 (KAKKLTNYD). A helical membrane pass occupies residues 377–397 (VCSILLGTSTLFVWVGVIRYL). The Cytoplasmic portion of the chain corresponds to 398–419 (GYFQTYNVLILTMQASLPKVLR). The helical transmembrane segment at 420-440 (FCACAGMIYLGYTFCGWIVLG) threads the bilayer. At 441–448 (PYHEKFEN) the chain is on the extracellular side. The segment at residues 449–469 (LNIVAECLFSLVNGDDMFATF) is an intramembrane region (pore-forming). The short motif at 461–464 (NGDD) is the Selectivity filter element. The Extracellular portion of the chain corresponds to 470-480 (AQIQQKSILVW). A helical membrane pass occupies residues 481–502 (LFSRLYLYSFISLFIYMVLSLF). Residues 503–566 (IALITDSYHT…RSNDHLILID (64 aa)) lie on the Cytoplasmic side of the membrane.

Belongs to the transient receptor (TC 1.A.4) family. Polycystin subfamily. MCOLN2 sub-subfamily. Forms homooligomeric complexes; probably tetrameric. Can heterooligomerize with MCOLN1; heteromeric assemblies have different channel properties as compared to the respective homooligomers and may be tissue-specific. Interacts with TMEM176A. Expressed in activated macrophages and microglia (at protein level). As to expression, isoform 1 is widely expressed at very low levels. In terms of tissue distribution, isoform 2 is expressed at high levels in lymphoid tissues (thymus and spleen) and kidney, and at moderate levels in heart, lung, liver and stomach.

The protein localises to the cell membrane. Its subcellular location is the lysosome membrane. It localises to the recycling endosome membrane. It carries out the reaction Ca(2+)(in) = Ca(2+)(out). The catalysed reaction is Fe(2+)(in) = Fe(2+)(out). Its activity is regulated as follows. Fe(2+) channel activity is potentiated by low pH. In terms of biological role, nonselective cation channel probably playing a role in the regulation of membrane trafficking events. Acts as a Ca(2+)-permeable cation channel with inwardly rectifying activity. May activate ARF6 and be involved in the trafficking of GPI-anchored cargo proteins to the cell surface via the ARF6-regulated recycling pathway. May play a role in immune processes. In adaptive immunity, TRPML2 and TRPML1 may play redundant roles in the function of the specialized lysosomes of B cells. In the innate immune response, may play a role in the regulation of chemokine secretion and macrophage migration. Through a possible and probably tissue-specific heteromerization with MCOLN1 may be at least in part involved in many lysosome-dependent cellular events. Also functions as a Fe(2+) permeable channel. The sequence is that of Mucolipin-2 (Mcoln2) from Mus musculus (Mouse).